We begin with the raw amino-acid sequence, 123 residues long: Ribosome-binding factor A (123 aa).

Belongs to the RbfA family. As to quaternary structure, monomer. Binds 30S ribosomal subunits, but not 50S ribosomal subunits or 70S ribosomes.

The protein resides in the cytoplasm. One of several proteins that assist in the late maturation steps of the functional core of the 30S ribosomal subunit. Associates with free 30S ribosomal subunits (but not with 30S subunits that are part of 70S ribosomes or polysomes). Required for efficient processing of 16S rRNA. May interact with the 5'-terminal helix region of 16S rRNA. This chain is Ribosome-binding factor A, found in Chlamydia trachomatis serovar A (strain ATCC VR-571B / DSM 19440 / HAR-13).